The primary structure comprises 254 residues: Hydroxyacylglutathione hydrolase (254 aa).

His53, His55, Asp57, His58, His111, Asp128, and His166 together coordinate Zn(2+).

Belongs to the metallo-beta-lactamase superfamily. Glyoxalase II family. Monomer. The cofactor is Zn(2+).

The catalysed reaction is an S-(2-hydroxyacyl)glutathione + H2O = a 2-hydroxy carboxylate + glutathione + H(+). It participates in secondary metabolite metabolism; methylglyoxal degradation; (R)-lactate from methylglyoxal: step 2/2. In terms of biological role, thiolesterase that catalyzes the hydrolysis of S-D-lactoyl-glutathione to form glutathione and D-lactic acid. The chain is Hydroxyacylglutathione hydrolase from Aeromonas salmonicida (strain A449).